The chain runs to 351 residues: Protein Wnt-8b (351 aa).

Residues 1-22 form the signal peptide; sequence MFLSKPSVYICLFTCVLQLSHS. A disulfide bond links Cys54 and Cys65. A glycan (N-linked (GlcNAc...) asparagine) is linked at Asn103. Cystine bridges form between Cys104–Cys112, Cys114–Cys132, Cys180–Cys194, Cys182–Cys189, Cys256–Cys294, Cys272–Cys287, Cys291–Cys333, Cys309–Cys324, Cys311–Cys321, and Cys316–Cys317. The O-palmitoleoyl serine moiety is linked to residue Ser186. Residue Asn259 is glycosylated (N-linked (GlcNAc...) asparagine).

The protein belongs to the Wnt family. Palmitoleoylation is required for efficient binding to frizzled receptors. Depalmitoleoylation leads to Wnt signaling pathway inhibition. Post-translationally, proteolytic processing by TIKI1 and TIKI2 promotes oxidation and formation of large disulfide-bond oligomers, leading to inactivation of WNT8B. As to expression, expression is restricted to the brain, and more specifically to the forebrain.

It localises to the secreted. The protein localises to the extracellular space. The protein resides in the extracellular matrix. Functionally, ligand for members of the frizzled family of seven transmembrane receptors. May play an important role in the development and differentiation of certain forebrain structures, notably the hippocampus. The chain is Protein Wnt-8b (WNT8B) from Homo sapiens (Human).